The following is a 592-amino-acid chain: Calnexin (592 aa).

An N-terminal signal peptide occupies residues 1-20 (MEGKWLLCMLLVLGTAIVEA). Topologically, residues 21 to 481 (HDGHDDDVID…QMIEAAEERP (461 aa)) are lumenal. Residues Ser-74 and Asp-117 each contribute to the Ca(2+) site. The residue at position 137 (Lys-137) is an N6-acetyllysine. Cys-160 and Cys-194 are oxidised to a cystine. An alpha-D-glucoside is bound by residues Tyr-164, Lys-166, Tyr-185, and Asp-192. The segment at 260–345 (GNLLNDMTPP…AEKPEDWDED (86 aa)) is disordered. The segment covering 274–319 (REIEDPEDRKPEDWDERPKIPDPEAVKPDDWDEDAPAKIPDEEATK) has biased composition (basic and acidic residues). The tract at residues 276–409 (IEDPEDRKPE…RKIPNPDFFE (134 aa)) is p domain (Extended arm). 5 tandem repeats follow at residues 278–290 (DPED…WDER), 295–307 (DPEA…WDED), 314–326 (DEEA…WLDD), 333–345 (DPDA…WDED), and 348–358 (GEWEAPQIANP). 4 X approximate repeats stretches follow at residues 278 to 345 (DPED…WDED) and 348 to 405 (GEWE…IPNP). Acidic residues predominate over residues 323–345 (WLDDEPEYVPDPDAEKPEDWDED). Positions 326 to 359 (DEPEYVPDPDAEKPEDWDEDMDGEWEAPQIANPK) are interaction with PPIB. A disulfide bridge connects residues Cys-360 and Cys-366. A run of 3 repeats spans residues 367–377 (GVWQRPMIDNP), 381–391 (GKWKPPMIDNP), and 395–405 (GIWKPRKIPNP). Residue Glu-425 participates in an alpha-D-glucoside binding. Asp-436 is a binding site for Ca(2+). The helical transmembrane segment at 482–502 (WLWVVYILTVALPVFLVILFC) threads the bilayer. Residues Cys-502 and Cys-503 are each lipidated (S-palmitoyl cysteine). Residues 503–592 (CSGKKQTSAM…SPRNRKPRRE (90 aa)) are Cytoplasmic-facing. Residues 503 to 592 (CSGKKQTSAM…SPRNRKPRRE (90 aa)) form a sufficient to mediate interaction with SGIP1 region. Residues 511–592 (AMEYKKTDAP…SPRNRKPRRE (82 aa)) form a disordered region. Over residues 525-547 (KEEEEEKEEEKDKGDEEEEGEEK) the composition is skewed to acidic residues. Ser-554 bears the Phosphoserine mark. Thr-562 is modified (phosphothreonine). Ser-564 carries the post-translational modification Phosphoserine; by MAPK3. Ser-583 is subject to Phosphoserine.

The protein belongs to the calreticulin family. Interacts with MAPK3/ERK1. Interacts with KCNH2. Associates with ribosomes. Interacts with SGIP1; involved in negative regulation of endocytosis. The palmitoylated form interacts with the ribosome-translocon complex component SSR1, promoting efficient folding of glycoproteins. Interacts with SERPINA2P/SERPINA2 and with the S and Z variants of SERPINA1. Interacts with PPIB. Interacts with ZNRF4. Interacts with SMIM22. Interacts with TMX2. Interacts with TMEM35A/NACHO and CHRNA7. Interacts with reticulophagy regulators RETREG2 and RETREG3. Interacts with DNM1L; may form part of a larger protein complex at the ER-mitochondrial interface during mitochondrial fission. Interacts with ADAM7. Post-translationally, phosphorylated at Ser-564 by MAPK3/ERK1. Phosphorylation by MAPK3/ERK1 increases its association with ribosomes. Palmitoylation by DHHC6 leads to the preferential localization to the perinuclear rough ER. It mediates the association of calnexin with the ribosome-translocon complex (RTC) which is required for efficient folding of glycosylated proteins. In terms of processing, ubiquitinated, leading to proteasomal degradation. Probably ubiquitinated by ZNRF4.

It is found in the endoplasmic reticulum membrane. The protein localises to the mitochondrion membrane. It localises to the melanosome membrane. In terms of biological role, calcium-binding protein that interacts with newly synthesized monoglucosylated glycoproteins in the endoplasmic reticulum. It may act in assisting protein assembly and/or in the retention within the ER of unassembled protein subunits. It seems to play a major role in the quality control apparatus of the ER by the retention of incorrectly folded proteins. Associated with partial T-cell antigen receptor complexes that escape the ER of immature thymocytes, it may function as a signaling complex regulating thymocyte maturation. Additionally it may play a role in receptor-mediated endocytosis at the synapse. The polypeptide is Calnexin (CANX) (Pongo abelii (Sumatran orangutan)).